Here is a 451-residue protein sequence, read N- to C-terminus: Serine--tRNA ligase, cytoplasmic (451 aa).

Cysteines 213 and 244 form a disulfide. Position 238–240 (238–240 (TAE)) interacts with L-serine. ATP is bound by residues 269-271 (RKE) and V285. Residue E292 participates in L-serine binding. 358-361 (ELVS) is a binding site for ATP. Position 396 (T396) interacts with L-serine.

It belongs to the class-II aminoacyl-tRNA synthetase family. Type-1 seryl-tRNA synthetase subfamily. As to quaternary structure, homodimer. The tRNA molecule binds across the dimer.

Its subcellular location is the cytoplasm. It localises to the cytosol. It catalyses the reaction tRNA(Ser) + L-serine + ATP = L-seryl-tRNA(Ser) + AMP + diphosphate + H(+). Its function is as follows. Catalyzes the attachment of serine to tRNA(Ser) in a two-step reaction: serine is first activated by ATP to form Ser-AMP and then transferred to the acceptor end of tRNA(Ser). The chain is Serine--tRNA ligase, cytoplasmic from Arabidopsis thaliana (Mouse-ear cress).